Reading from the N-terminus, the 402-residue chain is N-acetyltransferase Eis (402 aa).

One can recognise an N-acetyltransferase domain in the interval 3–154 (VTLCSPTEDD…RFARFHADAP (152 aa)). Acetyl-CoA is bound by residues 85–87 (VAV), 93–98 (RRGLLR), and 121–122 (SE). Tyr-126 serves as the catalytic Proton donor. Catalysis depends on Phe-402, which acts as the Proton acceptor; via carboxylate.

Belongs to the acetyltransferase Eis family. As to quaternary structure, homohexamer; trimer of dimers.

Its subcellular location is the secreted. The protein resides in the host cytoplasmic vesicle. The protein localises to the host phagosome. It is found in the extracellular vesicle. It localises to the bacterial extracellular vesicle. Its subcellular location is the host extracellular space. The catalysed reaction is L-lysyl-[protein] + acetyl-CoA = N(6)-acetyl-L-lysyl-[protein] + CoA + H(+). In terms of biological role, effector that is released into the host cell and affects host immune responses. Acts as an acetyltransferase that acetylates lysine residues of host proteins. This Mycobacterium bovis (strain ATCC BAA-935 / AF2122/97) protein is N-acetyltransferase Eis.